Reading from the N-terminus, the 190-residue chain is Transmembrane protein 11, mitochondrial (190 aa).

The next 2 helical transmembrane spans lie at 84–100 and 107–124; these read VLAGTACLFTPLALPLD and LPAGVLSLACCTLYGISW.

This sequence belongs to the TMEM11 family. As to quaternary structure, associates with the mitochondrial contact site and cristae organizing system (MICOS) complex, composed of at least MICOS10/MIC10, CHCHD3/MIC19, CHCHD6/MIC25, APOOL/MIC27, IMMT/MIC60, APOO/MIC23/MIC26 and QIL1/MIC13. This complex was also known under the names MINOS or MitOS complex. The MICOS complex associates with mitochondrial outer membrane proteins SAMM50, MTX1, MTX2 and DNAJC11, mitochondrial inner membrane protein TMEM11 and with HSPA9. Interacts with IMMT/MIC60.

The protein localises to the mitochondrion inner membrane. Plays a role in mitochondrial morphogenesis. The protein is Transmembrane protein 11, mitochondrial (Tmem11) of Mus musculus (Mouse).